The chain runs to 310 residues: Vomeronasal type-1 receptor 101 (310 aa).

At 1-19 the chain is on the extracellular side; the sequence is MNKVNILPSDTNMKITLFS. Residues 20–40 traverse the membrane as a helical segment; that stretch reads ELSVGISANSILFFAHLCMFF. Residues 41–49 lie on the Cytoplasmic side of the membrane; it reads EENRSKPID. Residues 50–70 traverse the membrane as a helical segment; that stretch reads LCIAFLSLTQLMLLVTMGLIA. Over 71-93 the chain is Extracellular; the sequence is ADMFMAQGIWDITTCRSLIYFHR. Cys85 and Cys172 are disulfide-bonded. Residues 94–114 form a helical membrane-spanning segment; sequence LLRGFNLCAACLLHILWTFTL. At 115–134 the chain is on the cytoplasmic side; it reads SPRSSCLTKFKHKSPHHISG. The chain crosses the membrane as a helical span at residues 135 to 155; that stretch reads AYLFFCVLYMSFSSHLFVLVI. The Extracellular segment spans residues 156 to 193; it reads ATSNLTSDHFMYVTQSCSLLPMSYSRTSTFSLLMVTRE. N-linked (GlcNAc...) asparagine glycosylation occurs at Asn159. Residues 194-214 traverse the membrane as a helical segment; it reads VFLISLMALSSGYMVTLLWRH. At 215-238 the chain is on the cytoplasmic side; it reads KKQAQHLHSTRLSSKASPQQRATR. A helical membrane pass occupies residues 239–259; that stretch reads TILLLMTFFVVFYILGTVIFH. At 260–268 the chain is on the extracellular side; it reads SRTKFKDGS. A helical membrane pass occupies residues 269-289; the sequence is IFYCVQIIVSHSYATISPFVF. At 290–310 the chain is on the cytoplasmic side; that stretch reads VFSEKRIIKFFRSMCGRIVNT.

It belongs to the G-protein coupled receptor 1 family. As to expression, expressed in 1-4% of neurons of the vomeronasal organ. Only one pheromone receptor gene may be expressed in a particular neuron. Not expressed in the main olfactory epithelium.

It localises to the cell membrane. In terms of biological role, putative pheromone receptor implicated in the regulation of social as well as reproductive behavior. The chain is Vomeronasal type-1 receptor 101 (Vom1r101) from Rattus norvegicus (Rat).